A 162-amino-acid chain; its full sequence is uncharacterized protein (162 aa).

Residues 6–78 (LDDLDRNILR…ALIVLEVGKP (73 aa)) form the HTH asnC-type domain. The H-T-H motif DNA-binding region spans 25 to 44 (ISELSEQLKKPESTIHFRIK).

This is an uncharacterized protein from Pyrococcus furiosus (strain ATCC 43587 / DSM 3638 / JCM 8422 / Vc1).